We begin with the raw amino-acid sequence, 317 residues long: Porphobilinogen deaminase (317 aa).

Cys245 carries the S-(dipyrrolylmethanemethyl)cysteine modification.

This sequence belongs to the HMBS family. Monomer. Dipyrromethane is required as a cofactor.

It catalyses the reaction 4 porphobilinogen + H2O = hydroxymethylbilane + 4 NH4(+). It participates in porphyrin-containing compound metabolism; protoporphyrin-IX biosynthesis; coproporphyrinogen-III from 5-aminolevulinate: step 2/4. Its pathway is porphyrin-containing compound metabolism; chlorophyll biosynthesis. Tetrapolymerization of the monopyrrole PBG into the hydroxymethylbilane pre-uroporphyrinogen in several discrete steps. The chain is Porphobilinogen deaminase from Synechococcus sp. (strain CC9902).